The primary structure comprises 73 residues: N-terminal-borealin-like protein (73 aa).

The protein belongs to the borealin family. In terms of assembly, component of the aurora kinase complex composed of at least BIR1, BNL1, IPL1 and SLI15.

The protein resides in the nucleus. The protein localises to the cytoplasm. It is found in the cytoskeleton. It localises to the spindle. Its function is as follows. Component of the aurora kinase complex, also called chromosomal passenger complex (CPC), essential for chromosome segregation and metaphase chromosome alignment. Mediates the SLI15-BIR1 interaction within the CPC. The polypeptide is N-terminal-borealin-like protein (NBL1) (Saccharomyces cerevisiae (strain ATCC 204508 / S288c) (Baker's yeast)).